The sequence spans 211 residues: Beta-crystallin B3 (211 aa).

Methionine 1 carries the post-translational modification N-acetylmethionine. Residue alanine 2 is modified to N-acetylalanine; in Beta-crystallin B3, N-terminally processed. Residues 2-23 (AEQHSTPEQAAAGKSHGGLGGS) are N-terminal arm. Beta/gamma crystallin 'Greek key' domains follow at residues 24 to 63 (YKVI…QVES) and 64 to 108 (GPWL…RPLH). The segment at 109 to 113 (IDGPD) is connecting peptide. 2 consecutive Beta/gamma crystallin 'Greek key' domains span residues 114–155 (HKLH…RAIN) and 156–198 (GTWV…RRIR). The C-terminal arm stretch occupies residues 200 to 211 (QKWHKRGVFLSS).

It belongs to the beta/gamma-crystallin family. Homo/heterodimer, or complexes of higher-order. The structure of beta-crystallin oligomers seems to be stabilized through interactions between the N-terminal arms.

Crystallins are the dominant structural components of the vertebrate eye lens. The protein is Beta-crystallin B3 (CRYBB3) of Bos taurus (Bovine).